We begin with the raw amino-acid sequence, 575 residues long: MFGIQDTLGRGPALKEKSLGAEMDSVRSWVRNVGVVDANVAAQSGVALSRAHFEKQPPSNLRKSNFFHFVLALYDRQGQPVEIERTAFVDFVENDKEQGNEKTNNGTHYKLQLLYSNGVRTEQDLYVRLIDSVTKQPIAYEGQNKNPEMCRVLLTHEVMCSRCCEKKSCGNRNETPSDPVIIDRFFLKFFLKCNQNCLKTAGNPRDMRRFQVVLSTTVNVDGHVLAVSDNMFVHNNSKHGRRARRLDPSEATPCIKAISPSEGWTTGGAMVIIIGDNFFDGLQVVFGTMLVWSELITPHAIRVQTPPRHIPGVVEVTLSYKSKQFCKGAPGRFIYTALNEPTIDYGFQRLQKVIPRHPGDPERLAKEMLLKRAADLVEALYGTPHNNQDIILKRAADIAEALYSVPRNPSQIPALSSSPAHSGMMGINSYGSQLGVSISESTQGNNQGYIRNTSSISPRGYSSSSTPQQSNYSTSSNSMNGYSNVPMANLGVPGSPGFLNGSPTGSPYGIMSSSPTVGSSSTSSILPFSSSVFPAVKQKSAFAPVIRPQGSPSPACSSGNGNGFRAMTGLVVPPM.

The interaction with DNA stretch occupies residues 62–65 (RKSN). The segment at 150–169 (CRVLLTHEVMCSRCCEKKSC) adopts a C5-type zinc-finger fold. 2 interaction with DNA regions span residues 196 to 203 (NCLKTAGN) and 235 to 238 (NNSK). Residues 253–336 (PCIKAISPSE…KGAPGRFIYT (84 aa)) form the IPT/TIG domain. Polar residues predominate over residues 441 to 453 (STQGNNQGYIRNT). The interval 441-479 (STQGNNQGYIRNTSSISPRGYSSSSTPQQSNYSTSSNSM) is disordered. Residues 454–479 (SSISPRGYSSSSTPQQSNYSTSSNSM) show a composition bias toward low complexity.

Belongs to the COE family. As to quaternary structure, forms either a homodimer or a heterodimer with a related family member. Interacts with SIX1.

The protein localises to the nucleus. Functionally, transcription factor that, in osteoblasts, activates the decoy receptor for RANKL, TNFRSF11B, which in turn regulates osteoclast differentiation. Acts in synergy with the Wnt-responsive LEF1/CTNNB1 pathway. Recognizes variations of the palindromic sequence 5'-ATTCCCNNGGGAATT-3'. The protein is Transcription factor COE2 (EBF2) of Bos taurus (Bovine).